The primary structure comprises 20 residues: Outer membrane protein 40Va (20 aa).

This sequence belongs to the Gram-negative porin family. Homotrimer.

The protein localises to the cell outer membrane. Its function is as follows. Forms pores that allow passive diffusion of small molecules across the outer membrane. The sequence is that of Outer membrane protein 40Va from Vibrio alginolyticus.